The chain runs to 347 residues: Protein RecA (347 aa).

Gly65–Thr72 is an ATP binding site. Residues Lys327 to Glu336 are compositionally biased toward basic and acidic residues. The tract at residues Lys327–Met347 is disordered. Acidic residues predominate over residues Glu337 to Met347.

This sequence belongs to the RecA family.

The protein resides in the cytoplasm. In terms of biological role, can catalyze the hydrolysis of ATP in the presence of single-stranded DNA, the ATP-dependent uptake of single-stranded DNA by duplex DNA, and the ATP-dependent hybridization of homologous single-stranded DNAs. It interacts with LexA causing its activation and leading to its autocatalytic cleavage. This Xylella fastidiosa (strain M23) protein is Protein RecA.